The following is a 230-amino-acid chain: Transmembrane 4 L6 family member 20 (230 aa).

Topologically, residues M1 to N11 are lumenal. Residues G12 to L32 form a helical membrane-spanning segment. The Cytoplasmic segment spans residues N33–P44. A helical membrane pass occupies residues I45–A65. Over T66–G83 the chain is Lumenal. The helical transmembrane segment at M84–V104 threads the bilayer. The Cytoplasmic portion of the chain corresponds to S105 to R185. Residues I186 to G206 traverse the membrane as a helical segment. Topologically, residues L207–V230 are lumenal.

The protein belongs to the L6 tetraspanin family. Glycosylated at Asn-132 in presence of ceramide which inverts the orientation of TM4SF20 in membranes exposing these residues to the endoplasmic reticulum lumen. Post-translationally, cleaved by signal peptidase at Ser-14 but the peptide does not act as a signal peptide. Cleavage is inhibited by ceramide which inverts the orientation of TM4SF20 in membranes exposing the N-terminus to the cytosol and not to the endoplasmic reticulum lumen.

It is found in the membrane. The protein localises to the endoplasmic reticulum membrane. Its function is as follows. Polytopic transmembrane protein. Inhibits regulated intramembrane proteolysis (RIP) of CREB3L1, inhibiting its activation and the induction of collagen synthesis. In response to ceramide, which alters TM4SF20 membrane topology, stimulates RIP activation of CREB3L1. Ceramide reverses the direction through which transmembrane helices are translocated into the endoplasmic reticulum membrane during translation of TM4SF20, this mechanism is called 'regulated alternative translocation' (RAT) and regulates the function of the transmembrane protein. The protein is Transmembrane 4 L6 family member 20 (TM4SF20) of Bos taurus (Bovine).